The chain runs to 148 residues: Aspartate carbamoyltransferase regulatory chain (148 aa).

Cysteine 106, cysteine 111, cysteine 134, and cysteine 137 together coordinate Zn(2+).

The protein belongs to the PyrI family. Contains catalytic and regulatory chains. Zn(2+) is required as a cofactor.

Functionally, involved in allosteric regulation of aspartate carbamoyltransferase. The polypeptide is Aspartate carbamoyltransferase regulatory chain (Methanococcus maripaludis (strain C7 / ATCC BAA-1331)).